A 222-amino-acid polypeptide reads, in one-letter code: 7-cyano-7-deazaguanine synthase (222 aa).

11-21 (LSGGMDSAVLL) is a binding site for ATP. Positions 192, 200, 203, and 206 each coordinate Zn(2+).

This sequence belongs to the QueC family. Requires Zn(2+) as cofactor.

It carries out the reaction 7-carboxy-7-deazaguanine + NH4(+) + ATP = 7-cyano-7-deazaguanine + ADP + phosphate + H2O + H(+). Its pathway is purine metabolism; 7-cyano-7-deazaguanine biosynthesis. In terms of biological role, catalyzes the ATP-dependent conversion of 7-carboxy-7-deazaguanine (CDG) to 7-cyano-7-deazaguanine (preQ(0)). This chain is 7-cyano-7-deazaguanine synthase, found in Sulfurihydrogenibium sp. (strain YO3AOP1).